A 245-amino-acid chain; its full sequence is 1-(5-phosphoribosyl)-5-[(5-phosphoribosylamino)methylideneamino] imidazole-4-carboxamide isomerase (245 aa).

Catalysis depends on aspartate 11, which acts as the Proton acceptor. Aspartate 132 serves as the catalytic Proton donor.

The protein belongs to the HisA/HisF family.

It is found in the cytoplasm. The catalysed reaction is 1-(5-phospho-beta-D-ribosyl)-5-[(5-phospho-beta-D-ribosylamino)methylideneamino]imidazole-4-carboxamide = 5-[(5-phospho-1-deoxy-D-ribulos-1-ylimino)methylamino]-1-(5-phospho-beta-D-ribosyl)imidazole-4-carboxamide. Its pathway is amino-acid biosynthesis; L-histidine biosynthesis; L-histidine from 5-phospho-alpha-D-ribose 1-diphosphate: step 4/9. The sequence is that of 1-(5-phosphoribosyl)-5-[(5-phosphoribosylamino)methylideneamino] imidazole-4-carboxamide isomerase from Geobacillus kaustophilus (strain HTA426).